Reading from the N-terminus, the 319-residue chain is Ribonuclease Z (319 aa).

Zn(2+) is bound by residues H62, H64, D66, H67, H145, D215, and H273. Residue D66 is the Proton acceptor of the active site.

This sequence belongs to the RNase Z family. Homodimer. Zn(2+) serves as cofactor.

It carries out the reaction Endonucleolytic cleavage of RNA, removing extra 3' nucleotides from tRNA precursor, generating 3' termini of tRNAs. A 3'-hydroxy group is left at the tRNA terminus and a 5'-phosphoryl group is left at the trailer molecule.. Its function is as follows. Zinc phosphodiesterase, which displays some tRNA 3'-processing endonuclease activity. Probably involved in tRNA maturation, by removing a 3'-trailer from precursor tRNA. This chain is Ribonuclease Z, found in Borrelia recurrentis (strain A1).